A 708-amino-acid polypeptide reads, in one-letter code: MPRVSAEILDISHTGGNESPTLGELLKDFNDSGRKKYPGENAPTQHILDLAPAAETRSVPFLLSFNNLSYNVVLRRRFDFSRRKTASVKTLLDDITGEARDGEILAVLGGSGAGKSTLIDALAGRVAEDSLKGTVTLNGEKVLQSRLLKVISAYVMQDDLLFPMLTVKETLMFASEFRLPRSLPKSKKMERVETLIDQLGLRNAADTVIGDEGHRGVSGGERRRVSIGIDIIHDPILLFLDEPTSGLDSTNAFMVVQVLKRIAQSGSVVIMSIHQPSARIIGLLDRLIILSHGKSVFNGSPVSLPSFFSSFGRPIPEKENITEFALDVIRELEGSSEGTRDLVEFNEKWQQNQTARATTQSRVSLKEAIAASVSRGKLVSGSSGANPISMETVSSYANPPLAETFILAKRYIKNWIRTPELIGMRIGTVMVTGLLLATVYWRLDNTPRGAQERMGFFAFGMSTMFYCCADNIPVFIQERYIFLRETTHNAYRTSSYVISHALVSLPQLLALSIAFAATTFWTVGLSGGLESFFYYCLIIYAAFWSGSSIVTFISGLIPNVMMSYMVTIAYLSYCLLLGGFYINRDRIPLYWIWFHYISLLKYPYEAVLINEFDDPSRCFVKGVQVFDGTLLAEVSHVMKVKLLDTLSGSLGTKITESTCLRTGPDLLMQQGITQLSKWDCLWITLAWGLFFRILFYLSLLFGSKNKRT.

Residues 75 to 317 (RRRFDFSRRK…FSSFGRPIPE (243 aa)) enclose the ABC transporter domain. 109 to 116 (GGSGAGKS) lines the ATP pocket. Positions 402-612 (AETFILAKRY…PYEAVLINEF (211 aa)) constitute an ABC transmembrane type-2 domain. The next 7 helical transmembrane spans lie at 421-441 (LIGMRIGTVMVTGLLLATVYW), 456-476 (FFAFGMSTMFYCCADNIPVFI), 508-528 (LLALSIAFAATTFWTVGLSGG), 537-557 (LIIYAAFWSGSSIVTFISGLI), 560-580 (VMMSYMVTIAYLSYCLLLGGF), 589-609 (LYWIWFHYISLLKYPYEAVLI), and 681-701 (LWITLAWGLFFRILFYLSLLF).

It belongs to the ABC transporter superfamily. ABCG family. Eye pigment precursor importer (TC 3.A.1.204) subfamily.

Its subcellular location is the membrane. The protein is ABC transporter G family member 18 (ABCG18) of Arabidopsis thaliana (Mouse-ear cress).